Consider the following 554-residue polypeptide: Hydroxylamine reductase (554 aa).

[2Fe-2S] cluster contacts are provided by cysteine 3, cysteine 6, cysteine 18, and cysteine 25. Hybrid [4Fe-2O-2S] cluster contacts are provided by histidine 252, glutamate 276, cysteine 320, cysteine 408, cysteine 436, cysteine 461, glutamate 495, and lysine 497. The residue at position 408 (cysteine 408) is a Cysteine persulfide.

This sequence belongs to the HCP family. It depends on [2Fe-2S] cluster as a cofactor. Hybrid [4Fe-2O-2S] cluster serves as cofactor.

It localises to the cytoplasm. It catalyses the reaction A + NH4(+) + H2O = hydroxylamine + AH2 + H(+). Catalyzes the reduction of hydroxylamine to form NH(3) and H(2)O. The sequence is that of Hydroxylamine reductase from Shewanella baltica (strain OS195).